The chain runs to 153 residues: Small ribosomal subunit protein uS13 (153 aa).

The disordered stretch occupies residues 134–153 (GQRTKSNGRRGRSMGVSRKK).

It belongs to the universal ribosomal protein uS13 family.

Its subcellular location is the cytoplasm. Functionally, located at the top of the head of the 40S subunit, it contacts several helices of the 18S rRNA. This Encephalitozoon cuniculi (strain GB-M1) (Microsporidian parasite) protein is Small ribosomal subunit protein uS13 (RPS18).